The chain runs to 515 residues: Cytochrome P450 1A1 (515 aa).

A substrate-binding site is contributed by F225. C459 provides a ligand contact to heme.

This sequence belongs to the cytochrome P450 family. Requires heme as cofactor.

The protein localises to the endoplasmic reticulum membrane. The protein resides in the microsome membrane. The enzyme catalyses an organic molecule + reduced [NADPH--hemoprotein reductase] + O2 = an alcohol + oxidized [NADPH--hemoprotein reductase] + H2O + H(+). Functionally, cytochromes P450 are a group of heme-thiolate monooxygenases. They oxidize a variety of structurally unrelated compounds, including steroids, fatty acids, and xenobiotics. The chain is Cytochrome P450 1A1 (cyp1a1) from Microgadus tomcod (Atlantic tomcod).